The sequence spans 893 residues: MLSPQRALLCNLNHIHLQHVSLGLHLSRRPELREGPLSTPPPPGDTGGKESRGPCSGTLVDANSNSPAVPCRCCQEHGSSIENQQDPSQEEEAVSPSDPGCSSSLSSCSDLSPDESPVSVYSRDLPGNEDANPQPSTLELGSPLAPAGPSTCSPDSFCCSPDSCSGISSPPGPDLDSNCNALTTCQDLPSPGLEEEEDSGEQDLATSELSETEDGRIDAGKAEPSWKINPIWKIDTEKTEAGWKTIEDSDSGRKTDENTNSSLKTESGKLASCLNTNSGSKIDAGKTDGGWRGDVSQEPVPHRTITSFHELAQKRKRGPGLPLVPQAKKDRSDWLIVFSPDTELPPTGSLGGSLAPPREVTTFKELRSRSRAQPPPVPPRDPPAGWALVPPRPPPPPVPPRRKKNRLGLQPIAEGLSEEGRAASPRAGEEASASQEPEEPRAHAVVRSSWSFAGVPGAQRLWMAEAQSGTGQLQEQKKGLLIAVSASVDKIISHFGAARNLVQKAQLGDSRLSPDVGHLVLTTLCPALHALVADGLKPFRKDLITGQRRSSPWSVVEASVKPGSCTHSMGSLYSQVSRLAPLSSSRSRFHAFILGLLNTKQLELWFSSLQEDAGLLSLLYLPTGFFSLARGSCPSLATELLLLLQPLSVLTFHLDLLFEHHHHLPVGLQQAPAPSCPPPALQQTMQAVLHWGERLAQSLRGTSGESTTDSSTPSARPPAGSWWDQLTQASRVYASGGTEGFPLLRWGPRRHGTTAEAAQEAPPPTEQTTPGRSVWLGRLFGVPGCPSETESGAFKSRRPSSWLPPTVSVLALVKRGTPPETPPEALVSSPGSVVQADRAVRALCDHTAAGPDQLSFQRGELLRVIATVDEDWLRCGRDGVEGLVPVGYTSLVL.

Disordered stretches follow at residues E31–E223, E237–S332, S339–R358, and L366–A444. Residues H77–P87 are compositionally biased toward polar residues. Composition is skewed to low complexity over residues S95 to P117 and P149 to S165. Over residues S177–D187 the composition is skewed to polar residues. A compositionally biased stretch (basic and acidic residues) spans E237 to E257. 2 stretches are compositionally biased toward pro residues: residues Q373–P382 and P390–P399. The segment at M463–N598 is interaction with TRAF6. Positions D515–E659 constitute an RUN domain. Residues T599–P665 form an interaction with IKBKG region. Disordered regions lie at residues R700 to S721 and H751 to R772. 2 stretches are compositionally biased toward low complexity: residues T702–S714 and T754–P770. In terms of domain architecture, SH3 spans Q835 to L893.

In terms of assembly, associated component of the adapter-like complex 4 (AP-4). Interacts with IKBKG and TRAF6. Interacts with F-actin, acetylated actin, TUBB3, STX1A, KIF5B and KLC1. In terms of processing, phosphorylated on serine residues following nuclear translocation. Post-translationally, polyubiquitinated; polyubiquitination involves TRAF6. In terms of tissue distribution, expressed in brain, brain stem and spinal cord (at protein level).

Its subcellular location is the cytoplasm. The protein resides in the nucleus. It localises to the cytoskeleton. The protein localises to the cytoplasmic vesicle. It is found in the early endosome. Its subcellular location is the postsynaptic density. The protein resides in the golgi apparatus. Its function is as follows. Associates with the adapter-like complex 4 (AP-4) and may therefore play a role in vesicular trafficking of proteins at the trans-Golgi network. Signaling adapter which plays a role in neuronal differentiation. Involved in regulation of NGF-dependent neurite outgrowth. May play a role in neuronal vesicular trafficking, specifically involving pre-synaptic membrane proteins. Seems to be involved in signaling pathways that are regulated by the prolonged activation of MAPK. Can regulate the polyubiquitination of IKBKG and thus may be involved in regulation of the NF-kappa-B pathway. The protein is AP-4 complex accessory subunit RUSC1 of Mus musculus (Mouse).